Here is an 839-residue protein sequence, read N- to C-terminus: Toll-like receptor 4 (839 aa).

The N-terminal stretch at 1 to 23 (MMSASRLAGTLIPAMAFLSCVRP) is a signal peptide. The Extracellular segment spans residues 24–631 (ESWEPCVEVV…SLNITCQMNK (608 aa)). Cys29 and Cys40 form a disulfide bridge. Residue Asn35 is glycosylated (N-linked (GlcNAc...) asparagine). 5 LRR repeats span residues 55–76 (STKN…SFFS), 79–100 (ELQV…AYQS), 103–124 (HLST…AFSG), 127–148 (SLQK…PIGH), and 151–172 (TLKE…EYFS). Asn173 is a glycosylation site (N-linked (GlcNAc...) asparagine). LRR repeat units lie at residues 176–199 (NLEH…RVLH), 205–225 (NLSL…AFKE), and 227–247 (RLHK…KTCI). Asn205 carries N-linked (GlcNAc...) asparagine glycosylation. Cys281 and Cys306 are oxidised to a cystine. Residues Asn282 and Asn309 are each glycosylated (N-linked (GlcNAc...) asparagine). 10 LRR repeats span residues 331–351 (GWQH…LKLK), 352–373 (SLKR…VDLP), 374–394 (SLEF…CSQS), 400–422 (SLKY…LGLE), 423–444 (QLEH…SVFL), 448–456 (NLIYLDISH), 472–495 (SLEV…FTEL), 497–518 (NLTF…AFNS), 521–542 (SLQV…PYKC), and 545–565 (SLQV…QELQ). A disulfide bridge connects residues Cys390 and Cys391. N-linked (GlcNAc...) asparagine glycans are attached at residues Asn497 and Asn526. Asn575 carries N-linked (GlcNAc...) asparagine glycosylation. Positions 579-629 (NDFACTCEHQSFLQWIKDQRQLLVEVERMECATPSDKQGMPVLSLNITCQM) constitute an LRRCT domain. 2 cysteine pairs are disulfide-bonded: Cys583–Cys609 and Cys585–Cys627. N-linked (GlcNAc...) asparagine glycans are attached at residues Asn624 and Asn630. A helical transmembrane segment spans residues 632-652 (TIIGVSVLSVLVVSVVAVLVY). Topologically, residues 653-839 (KFYFHLMLLA…GCNWQEATSI (187 aa)) are cytoplasmic. The 144-residue stretch at 672–815 (NIYDAFVIYS…IFWRRLRKAL (144 aa)) folds into the TIR domain.

It belongs to the Toll-like receptor family. Belongs to the lipopolysaccharide (LPS) receptor, a multi-protein complex containing at least CD14, LY96 and TLR4. Binding to bacterial LPS leads to homodimerization. Interacts with LY96 via the extracellular domain. Interacts with MYD88. Interacts (via TIR domains) with TIRAP. Interacts with TICAM2. Interacts with NOX4. Interacts with CNPY3. Interacts with HSP90B1. The interaction with both CNPY3 and HSP90B1 is required for proper folding in the endoplasmic reticulum. Interacts with MAP3K21; this interaction leads to negative regulation of TLR4 signaling. Interacts with CD36, following CD36 stimulation by oxLDL or amyloid-beta 42, and forms a heterodimer with TLR6. The trimeric complex is internalized and triggers inflammatory response. LYN kinase activity facilitates TLR4-TLR6 heterodimerization and signal initiation. Interacts with TICAM1 in response to LPS in a WDFY1-dependent manner. Interacts with WDFY1 in response to LPS. Interacts with SMPDL3B. Interacts with CEACAM1; upon lipopolysaccharide stimulation, forms a complex including TLR4 and the phosphorylated form of SYK and CEACAM1, which in turn, recruits PTPN6 that dephosphorylates SYK, reducing the production of reactive oxygen species (ROS) and lysosome disruption, which in turn, reduces the activity of the inflammasome. Interacts with RFTN1; the interaction occurs in response to lipopolysaccharide stimulation. Interacts with SCIMP; the interaction occurs in response to lipopolysaccharide stimulation and is enhanced by phosphorylation of SCIMP by LYN. This interaction facilitates the phosphorylation of TLR4 by LYN which elicits a selective cytokine response in macrophages. Interacts with TRAF3IP3. Interacts with TREM1; this interaction enhances TLR4-mediated inflammatory response. Interacts with ZG16B/PAUF. Interacts with CD82; this interaction inhibits TLR4-mediated signaling pathway. Interacts with neutrophil recruitment protein from Aedes aegypti saliva; the interaction probably promotes activation of canonical NF-kappa-B signaling in skin-resident macrophages and subsequent expression of neutrophil chemoattractants. In terms of assembly, (Microbial infection) In case of infection, interacts with uropathogenic E.coli protein TcpC. As to quaternary structure, (Microbial infection) In case of infection, interacts with B.melitensis protein TcpB; TcpB abolishes the TLR4-TIRAP interaction in vitro. (Microbial infection) Interacts with ebolavirus protein GP; this interaction leads to the production of proinflammatory cytokines and suppressor of cytokine signaling 1/SOCS1. In terms of processing, N-Glycosylation of Asn-526 and Asn-575 by STT3A-containing OST-A complex is necessary for the expression of TLR4 on the cell surface and the LPS-response. Likewise, mutants lacking two or more of the other N-glycosylation sites were deficient in interaction with LPS. Phosphorylated on tyrosine residues by LYN after binding lipopolysaccharide. Post-translationally, ubiquitinated by RNF128 via 'Lys-28'-linked polyubiquitin chains, leading to proteasomal degradation. Highly expressed in placenta, spleen and peripheral blood leukocytes. Detected in monocytes, macrophages, dendritic cells and several types of T-cells. Expressed in pancreatic cancer cells but not in normal pancreatic cells (at protein level).

It is found in the cell membrane. The protein localises to the early endosome. Its subcellular location is the cell projection. It localises to the ruffle. Transmembrane receptor that functions as a pattern recognition receptor recognizing pathogen- and damage-associated molecular patterns (PAMPs and DAMPs) to induce innate immune responses via downstream signaling pathways. At the plasma membrane, cooperates with LY96 to mediate the innate immune response to bacterial lipopolysaccharide (LPS). Also involved in LPS-independent inflammatory responses triggered by free fatty acids, such as palmitate, and Ni(2+). Mechanistically, acts via MYD88, TIRAP and TRAF6, leading to NF-kappa-B activation, cytokine secretion and the inflammatory response. Alternatively, CD14-mediated TLR4 internalization via endocytosis is associated with the initiation of a MYD88-independent signaling via the TICAM1-TBK1-IRF3 axis leading to type I interferon production. In addition to the secretion of proinflammatory cytokines, initiates the activation of NLRP3 inflammasome and formation of a positive feedback loop between autophagy and NF-kappa-B signaling cascade. In complex with TLR6, promotes inflammation in monocytes/macrophages by associating with TLR6 and the receptor CD86. Upon ligand binding, such as oxLDL or amyloid-beta 42, the TLR4:TLR6 complex is internalized and triggers inflammatory response, leading to NF-kappa-B-dependent production of CXCL1, CXCL2 and CCL9 cytokines, via MYD88 signaling pathway, and CCL5 cytokine, via TICAM1 signaling pathway. In myeloid dendritic cells, vesicular stomatitis virus glycoprotein G but not LPS promotes the activation of IRF7, leading to type I IFN production in a CD14-dependent manner. Required for the migration-promoting effects of ZG16B/PAUF on pancreatic cancer cells. This Homo sapiens (Human) protein is Toll-like receptor 4 (TLR4).